A 114-amino-acid chain; its full sequence is Large ribosomal subunit protein bL20c (114 aa).

It belongs to the bacterial ribosomal protein bL20 family.

It localises to the plastid. The protein resides in the chloroplast. Functionally, binds directly to 23S ribosomal RNA and is necessary for the in vitro assembly process of the 50S ribosomal subunit. It is not involved in the protein synthesizing functions of that subunit. The chain is Large ribosomal subunit protein bL20c from Psilotum nudum (Whisk fern).